A 505-amino-acid chain; its full sequence is 2,3-bisphosphoglycerate-independent phosphoglycerate mutase (505 aa).

Mn(2+)-binding residues include aspartate 13 and serine 63. Catalysis depends on serine 63, which acts as the Phosphoserine intermediate. Residues histidine 124, 153–154 (RD), arginine 183, arginine 189, 254–257 (RADR), and lysine 330 contribute to the substrate site. 5 residues coordinate Mn(2+): aspartate 396, histidine 400, aspartate 437, histidine 438, and histidine 456.

Belongs to the BPG-independent phosphoglycerate mutase family. As to quaternary structure, monomer. Requires Mn(2+) as cofactor.

It carries out the reaction (2R)-2-phosphoglycerate = (2R)-3-phosphoglycerate. The protein operates within carbohydrate degradation; glycolysis; pyruvate from D-glyceraldehyde 3-phosphate: step 3/5. Catalyzes the interconversion of 2-phosphoglycerate and 3-phosphoglycerate. The polypeptide is 2,3-bisphosphoglycerate-independent phosphoglycerate mutase (Roseobacter denitrificans (strain ATCC 33942 / OCh 114) (Erythrobacter sp. (strain OCh 114))).